The sequence spans 197 residues: Imidazoleglycerol-phosphate dehydratase (197 aa).

The protein belongs to the imidazoleglycerol-phosphate dehydratase family.

It localises to the cytoplasm. It catalyses the reaction D-erythro-1-(imidazol-4-yl)glycerol 3-phosphate = 3-(imidazol-4-yl)-2-oxopropyl phosphate + H2O. Its pathway is amino-acid biosynthesis; L-histidine biosynthesis; L-histidine from 5-phospho-alpha-D-ribose 1-diphosphate: step 6/9. This chain is Imidazoleglycerol-phosphate dehydratase, found in Hahella chejuensis (strain KCTC 2396).